A 320-amino-acid chain; its full sequence is MRSAQVYRWQIPMDAGVVLRDRRLKTRDGLYVCLRDGEREGWGEISPLPGFSQETWEEAQTALLTWVNDWLQGNEGLPEMPSVAFGASCALAELTGVLPEAADYRAAPLCTGDPDDLVLRLADMPGEKIAKVKVGLYEAVRDGMVVNLLLEAIPDLHLRLDANRAWTPLKAQQFAKYVNPDYRARIAFLEEPCKTRDDSRAFARETGIAIAWDESLREADFTFEAEEGVRAVVIKPTLTGSLDKVREQVAAAHALGLTAVISSSIESSLGLTQLARIAAWLTPGTLPGLDTLHLMQAQQVRPWPGSALPCLKRDELERLL.

K133 acts as the Proton donor in catalysis. Positions 161, 190, and 213 each coordinate Mg(2+). K235 serves as the catalytic Proton acceptor.

It belongs to the mandelate racemase/muconate lactonizing enzyme family. MenC type 1 subfamily. A divalent metal cation is required as a cofactor.

It catalyses the reaction (1R,6R)-6-hydroxy-2-succinyl-cyclohexa-2,4-diene-1-carboxylate = 2-succinylbenzoate + H2O. It participates in quinol/quinone metabolism; 1,4-dihydroxy-2-naphthoate biosynthesis; 1,4-dihydroxy-2-naphthoate from chorismate: step 4/7. Its pathway is quinol/quinone metabolism; menaquinone biosynthesis. Converts 2-succinyl-6-hydroxy-2,4-cyclohexadiene-1-carboxylate (SHCHC) to 2-succinylbenzoate (OSB). The protein is o-succinylbenzoate synthase of Salmonella agona (strain SL483).